A 940-amino-acid chain; its full sequence is UvrABC system protein A (940 aa).

ATP is bound at residue 31–38 (GLSGSGKS). The C4-type zinc-finger motif lies at 253-280 (CPICGYSMRELEPRLFSFNNPAGACPTC). 2 ABC transporter domains span residues 310-587 (WDRR…PESL) and 607-937 (ANPE…RFLK). 640–647 (GVSGSGKS) contacts ATP. A C4-type zinc finger spans residues 740–766 (CEACQGDGVIKVEMHFLPDIYVPCDQC).

It belongs to the ABC transporter superfamily. UvrA family. As to quaternary structure, forms a heterotetramer with UvrB during the search for lesions. Interacts with TRCF (Mfd). UvrB and TRCF binding to UvrA could be mutually exclusive.

The protein resides in the cytoplasm. Functionally, the UvrABC repair system catalyzes the recognition and processing of DNA lesions. UvrA is an ATPase and a DNA-binding protein. A damage recognition complex composed of 2 UvrA and 2 UvrB subunits scans DNA for abnormalities. When the presence of a lesion has been verified by UvrB, the UvrA molecules dissociate. The chain is UvrABC system protein A from Escherichia coli (strain K12).